Here is a 296-residue protein sequence, read N- to C-terminus: MGPTASGKTALALELAEKHNCEIISVDSALIYRGMDIGSAKPSAEELARGPHRLIDIRDPAESYSAADFRADALREIEQIISMGKTPVLVGGTMMYFKALLEGLSPLPSADEAIRAEIQAEADANGWEALHAQLREIDPVSAERIHPNDPQRLSRAIEVYRISGKSLTELTQTKSAPLPYDVVQFAIAPRERKVLHELIGQRFRIMLEQGFIDEVAQLKARGDLHLDLPSMRCVGYRQCWQYLDGEFDYDTMVEKAVAATRQLAKRQLTWLRSWPELNWLESGAEGNLVTLMRQCR.

Gly2–Thr9 is a binding site for ATP. Thr4–Thr9 serves as a coordination point for substrate. 3 interaction with substrate tRNA regions span residues Asp27 to Leu30, Gln151 to Arg155, and Arg232 to Arg237.

This sequence belongs to the IPP transferase family. As to quaternary structure, monomer. Requires Mg(2+) as cofactor.

The enzyme catalyses adenosine(37) in tRNA + dimethylallyl diphosphate = N(6)-dimethylallyladenosine(37) in tRNA + diphosphate. Catalyzes the transfer of a dimethylallyl group onto the adenine at position 37 in tRNAs that read codons beginning with uridine, leading to the formation of N6-(dimethylallyl)adenosine (i(6)A). The chain is tRNA dimethylallyltransferase from Shewanella sp. (strain MR-7).